We begin with the raw amino-acid sequence, 123 residues long: Small ribosomal subunit protein uS12 (123 aa).

Residues 1–32 (MPTIQQLVRKGRTDKISKNKTPALKGSPQRRG) form a disordered region. Residue Asp-89 is modified to 3-methylthioaspartic acid. Residues 103–123 (DTQGVKGRKQARSRYGAKKEK) form a disordered region. The span at 108-123 (KGRKQARSRYGAKKEK) shows a compositional bias: basic residues.

It belongs to the universal ribosomal protein uS12 family. Part of the 30S ribosomal subunit. Contacts proteins S8 and S17. May interact with IF1 in the 30S initiation complex.

With S4 and S5 plays an important role in translational accuracy. Its function is as follows. Interacts with and stabilizes bases of the 16S rRNA that are involved in tRNA selection in the A site and with the mRNA backbone. Located at the interface of the 30S and 50S subunits, it traverses the body of the 30S subunit contacting proteins on the other side and probably holding the rRNA structure together. The combined cluster of proteins S8, S12 and S17 appears to hold together the shoulder and platform of the 30S subunit. This chain is Small ribosomal subunit protein uS12, found in Cutibacterium acnes (strain DSM 16379 / KPA171202) (Propionibacterium acnes).